We begin with the raw amino-acid sequence, 307 residues long: Auxin-induced protein PCNT115 (307 aa).

Y64 (proton donor) is an active-site residue. Residue H136 participates in substrate binding. 215–225 provides a ligand contact to NADP(+); the sequence is SPLGRGFLSSG.

This sequence belongs to the aldo/keto reductase family. Aldo/keto reductase 2 subfamily.

This is Auxin-induced protein PCNT115 from Nicotiana tabacum (Common tobacco).